The following is a 623-amino-acid chain: V-type proton ATPase catalytic subunit A (623 aa).

252–259 contacts ATP; it reads GAFGCGKT.

The protein belongs to the ATPase alpha/beta chains family. As to quaternary structure, V-ATPase is a heteromultimeric enzyme composed of a peripheral catalytic V1 complex (main components: subunits A, B, C, D, E, and F) attached to an integral membrane V0 proton pore complex (main component: the proteolipid protein).

It carries out the reaction ATP + H2O + 4 H(+)(in) = ADP + phosphate + 5 H(+)(out). Its function is as follows. Catalytic subunit of the peripheral V1 complex of vacuolar ATPase. V-ATPase vacuolar ATPase is responsible for acidifying a variety of intracellular compartments in eukaryotic cells. The sequence is that of V-type proton ATPase catalytic subunit A from Brassica napus (Rape).